Consider the following 518-residue polypeptide: Glutamate--cysteine ligase (518 aa).

Belongs to the glutamate--cysteine ligase type 1 family. Type 1 subfamily.

The catalysed reaction is L-cysteine + L-glutamate + ATP = gamma-L-glutamyl-L-cysteine + ADP + phosphate + H(+). It participates in sulfur metabolism; glutathione biosynthesis; glutathione from L-cysteine and L-glutamate: step 1/2. This Citrobacter koseri (strain ATCC BAA-895 / CDC 4225-83 / SGSC4696) protein is Glutamate--cysteine ligase.